A 264-amino-acid chain; its full sequence is NAD-capped RNA hydrolase NudC (264 aa).

Zn(2+) is bound by residues Cys99 and Cys102. Glu112 is a substrate binding site. Residues Cys117 and Cys120 each contribute to the Zn(2+) site. Residue Tyr125 coordinates substrate. In terms of domain architecture, Nudix hydrolase spans 126–253 (PVICPSIIVA…TIARKLIHAT (128 aa)). The a divalent metal cation site is built by Ala162, Glu178, and Glu182. The Nudix box motif lies at 163 to 184 (GFVEVGETFEQAVQREVFEETG). Substrate is bound at residue 196-203 (QPWAFPNS). Residue Glu223 participates in a divalent metal cation binding. Ala246 lines the substrate pocket.

The protein belongs to the Nudix hydrolase family. NudC subfamily. Homodimer. Requires Mg(2+) as cofactor. Mn(2+) serves as cofactor. Zn(2+) is required as a cofactor.

It carries out the reaction a 5'-end NAD(+)-phospho-ribonucleoside in mRNA + H2O = a 5'-end phospho-adenosine-phospho-ribonucleoside in mRNA + beta-nicotinamide D-ribonucleotide + 2 H(+). The enzyme catalyses NAD(+) + H2O = beta-nicotinamide D-ribonucleotide + AMP + 2 H(+). The catalysed reaction is NADH + H2O = reduced beta-nicotinamide D-ribonucleotide + AMP + 2 H(+). In terms of biological role, mRNA decapping enzyme that specifically removes the nicotinamide adenine dinucleotide (NAD) cap from a subset of mRNAs by hydrolyzing the diphosphate linkage to produce nicotinamide mononucleotide (NMN) and 5' monophosphate mRNA. The NAD-cap is present at the 5'-end of some mRNAs and stabilizes RNA against 5'-processing. Has preference for mRNAs with a 5'-end purine. Catalyzes the hydrolysis of a broad range of dinucleotide pyrophosphates. This chain is NAD-capped RNA hydrolase NudC, found in Haemophilus influenzae (strain PittGG).